Here is a 298-residue protein sequence, read N- to C-terminus: Quinolinate synthase (298 aa).

Residues His-19 and Ser-36 each contribute to the iminosuccinate site. Residue Cys-81 participates in [4Fe-4S] cluster binding. Iminosuccinate-binding positions include 107–109 (YVN) and Ser-124. Cys-168 contributes to the [4Fe-4S] cluster binding site. Iminosuccinate contacts are provided by residues 193–195 (HPE) and Thr-210. Cys-254 is a [4Fe-4S] cluster binding site.

Belongs to the quinolinate synthase family. Type 2 subfamily. It depends on [4Fe-4S] cluster as a cofactor.

The protein resides in the cytoplasm. The catalysed reaction is iminosuccinate + dihydroxyacetone phosphate = quinolinate + phosphate + 2 H2O + H(+). It participates in cofactor biosynthesis; NAD(+) biosynthesis; quinolinate from iminoaspartate: step 1/1. Catalyzes the condensation of iminoaspartate with dihydroxyacetone phosphate to form quinolinate. The polypeptide is Quinolinate synthase (Thermotoga sp. (strain RQ2)).